The sequence spans 219 residues: Thymidylate kinase (219 aa).

Glycine 7–threonine 14 is an ATP binding site.

It belongs to the thymidylate kinase family.

The enzyme catalyses dTMP + ATP = dTDP + ADP. Its function is as follows. Phosphorylation of dTMP to form dTDP in both de novo and salvage pathways of dTTP synthesis. This chain is Thymidylate kinase, found in Anaplasma phagocytophilum (strain HZ).